A 360-amino-acid polypeptide reads, in one-letter code: MTATLQRRESASLWERFCSWITSTENRLYIGWFGVLMIPTLLTATSVFIIAFVAAPPVDIDGIREPVAGSLLYGNNIISGAVIPSSAAIGIHFYPIWEAASLDEWLYNGGPYQLVVLHFLTGVACYIGREWELSYRLGMRPWISVAFTAPVAAAAAVFLVYPIGQGSFSDGMPLGISGTFNFMLVFQAEHNILMHPFHQLGVAGVFGGSLFSAMHGSLVTSSLIRETSENESANYGYKFGQEEETYNIVAAHGYFGRLIFQYASFNNSRSLHFFLGLWPVVGIWLTALSVSTMAFNLNGFNFNQSVVDSQGRVINTWADIINRANLGMEVMHERNAHNFPLDLASGESLPVALTAPAVNG.

3 consecutive transmembrane segments (helical) span residues 29–46 (YIGW…TATS), 118–133 (HFLT…EWEL), and 142–156 (WISV…AAAA). Residue H118 coordinates chlorophyll a. Y126 is a binding site for pheophytin a. D170 and E189 together coordinate [CaMn4O5] cluster. The helical transmembrane segment at 197 to 218 (FHQLGVAGVFGGSLFSAMHGSL) threads the bilayer. H198 contributes to the chlorophyll a binding site. A quinone contacts are provided by residues H215 and 264–265 (SF). Residue H215 participates in Fe cation binding. H272 is a binding site for Fe cation. The helical transmembrane segment at 274-288 (FLGLWPVVGIWLTAL) threads the bilayer. Residues H332, E333, D342, and A344 each contribute to the [CaMn4O5] cluster site. Positions 345–360 (SGESLPVALTAPAVNG) are excised as a propeptide.

It belongs to the reaction center PufL/M/PsbA/D family. PSII is composed of 1 copy each of membrane proteins PsbA, PsbB, PsbC, PsbD, PsbE, PsbF, PsbH, PsbI, PsbJ, PsbK, PsbL, PsbM, PsbT, PsbX, PsbY, PsbZ, Psb30/Ycf12, at least 3 peripheral proteins of the oxygen-evolving complex and a large number of cofactors. It forms dimeric complexes. Requires The D1/D2 heterodimer binds P680, chlorophylls that are the primary electron donor of PSII, and subsequent electron acceptors. It shares a non-heme iron and each subunit binds pheophytin, quinone, additional chlorophylls, carotenoids and lipids. D1 provides most of the ligands for the Mn4-Ca-O5 cluster of the oxygen-evolving complex (OEC). There is also a Cl(-1) ion associated with D1 and D2, which is required for oxygen evolution. The PSII complex binds additional chlorophylls, carotenoids and specific lipids. as cofactor. Tyr-161 forms a radical intermediate that is referred to as redox-active TyrZ, YZ or Y-Z. In terms of processing, C-terminally processed by CTPA; processing is essential to allow assembly of the oxygen-evolving complex and thus photosynthetic growth.

The protein localises to the plastid. It is found in the chloroplast thylakoid membrane. It carries out the reaction 2 a plastoquinone + 4 hnu + 2 H2O = 2 a plastoquinol + O2. In terms of biological role, photosystem II (PSII) is a light-driven water:plastoquinone oxidoreductase that uses light energy to abstract electrons from H(2)O, generating O(2) and a proton gradient subsequently used for ATP formation. It consists of a core antenna complex that captures photons, and an electron transfer chain that converts photonic excitation into a charge separation. The D1/D2 (PsbA/PsbD) reaction center heterodimer binds P680, the primary electron donor of PSII as well as several subsequent electron acceptors. This chain is Photosystem II protein D1, found in Pyropia yezoensis (Susabi-nori).